The primary structure comprises 247 residues: Probable transcriptional regulatory protein LAF_0541 (247 aa).

Residues 1–22 (MSGHSKWHNIQGRKNAQDAKRG) form a disordered region.

The protein belongs to the TACO1 family.

The protein localises to the cytoplasm. This is Probable transcriptional regulatory protein LAF_0541 from Limosilactobacillus fermentum (strain NBRC 3956 / LMG 18251) (Lactobacillus fermentum).